The sequence spans 660 residues: Putative ABC transporter ATP-binding MG390 (660 aa).

The Peptidase C39 domain occupies 6-126; that stretch reads QEQQNECGIC…KLWTGYAATV (121 aa). C12 is a catalytic residue. 6 consecutive transmembrane segments (helical) span residues 150 to 170, 188 to 208, 265 to 285, 290 to 310, 379 to 399, and 402 to 422; these read LVTF…LLAT, LVVL…LQVI, YIPN…LIGI, FLLI…YDFF, SFFQ…GIIE, and YQLS…TYAT. Residues 464 to 657 enclose the ABC transporter domain; it reads ISLENLSVTL…QNKINLTNYL (194 aa). 494–501 is a binding site for ATP; sequence GQNGSGKS.

Belongs to the ABC transporter superfamily.

The protein localises to the cell membrane. The chain is Putative ABC transporter ATP-binding MG390 from Mycoplasma genitalium (strain ATCC 33530 / DSM 19775 / NCTC 10195 / G37) (Mycoplasmoides genitalium).